We begin with the raw amino-acid sequence, 312 residues long: Malate dehydrogenase (312 aa).

Residues 12 to 17 (GAGFTG) and aspartate 36 contribute to the NAD(+) site. Residues arginine 87 and arginine 93 each coordinate substrate. NAD(+) contacts are provided by residues asparagine 100 and 123–125 (LTN). A substrate-binding site is contributed by asparagine 125. Serine 149 carries the post-translational modification Phosphoserine. Position 156 (arginine 156) interacts with substrate. Residue histidine 180 is the Proton acceptor of the active site.

The protein belongs to the LDH/MDH superfamily. MDH type 3 family.

It catalyses the reaction (S)-malate + NAD(+) = oxaloacetate + NADH + H(+). Catalyzes the reversible oxidation of malate to oxaloacetate. This chain is Malate dehydrogenase, found in Geobacillus sp. (strain WCH70).